The sequence spans 934 residues: Serine/threonine-protein kinase PknD (934 aa).

The region spanning 4–296 (YELIRLIGKG…ELRQALQPYL (293 aa)) is the Protein kinase domain. Residues 10-18 (IGKGGMGEV) and Lys-33 each bind ATP. The active-site Proton acceptor is Asp-138.

This sequence belongs to the protein kinase superfamily. Ser/Thr protein kinase family. Post-translationally, autophosphorylated on serine and threonine residues.

The enzyme catalyses L-seryl-[protein] + ATP = O-phospho-L-seryl-[protein] + ADP + H(+). The catalysed reaction is L-threonyl-[protein] + ATP = O-phospho-L-threonyl-[protein] + ADP + H(+). Together with the serine/threonine kinase Pkn1, may play a role in the specific interactions with host proteins during intracellular growth. In Chlamydia trachomatis serovar A (strain ATCC VR-571B / DSM 19440 / HAR-13), this protein is Serine/threonine-protein kinase PknD.